The following is a 25-amino-acid chain: Brevinin-2R (25 aa).

C19 and C25 form a disulfide bridge.

This sequence belongs to the frog skin active peptide (FSAP) family. Brevinin subfamily. In terms of tissue distribution, expressed by the skin glands.

The protein localises to the secreted. Its function is as follows. Cytotoxic to cancer cells, acts via the activation of the lysosomal-mitochondrial death pathway and autophagy-like cell death. Does not show significant hemolytic activity. The chain is Brevinin-2R from Pelophylax ridibundus (Marsh frog).